The sequence spans 1035 residues: Unconventional myosin IC (1035 aa).

The region spanning 21 to 703 (GVQDFVLLEN…TLFDTEDAYQ (683 aa)) is the Myosin motor domain. Residue 114–121 (GESGSGKT) participates in ATP binding. Residue serine 304 is modified to Phosphoserine. Residue threonine 310 is modified to Phosphothreonine. The tract at residues 578–600 (LNNLMDILMCKEPSYIRCIKPND) is actin-binding. IQ domains lie at 696–728 (FDTEDAYQEKKHEIAAIIQAHWKGLMQRRKYLK), 729–751 (LRAQVIIMQSYCRRKLAQQAAKK), and 752–779 (RREAADKIRAFIKGFITRNDAPNGFNEE). In terms of domain architecture, TH1 spans 857–1035 (KNNYASSVST…KGHLVIIGTQ (179 aa)).

It belongs to the TRAFAC class myosin-kinesin ATPase superfamily. Myosin family. As to quaternary structure, binds F-actin. As to expression, in the embryo, expressed in gastric caeca, midgut cells of the proventriculus, and in the mid and hindgut. In the larval and adult gut brush border, expressed in the microvilli. Also expressed at high levels in follicle cells during oogenesis.

The protein resides in the cytoplasm. The protein localises to the cell cortex. Its subcellular location is the cell membrane. In terms of biological role, unconventional myosin that functions as actin-based motor protein with ATPase activity. Binds to membranes enriched in phosphatidylinositol 4-5-bisphosphate, and can glide along actin filaments when anchored to a lipid bilayer. Functions as antagonist for Myo31DF, an unconventional myosin with an essential role in the establishment of body left-right asymmetry. This Drosophila melanogaster (Fruit fly) protein is Unconventional myosin IC (Myo61F).